The primary structure comprises 311 residues: Reaction center protein L chain (311 aa).

The next 3 helical transmembrane spans lie at 68 to 90 (FWGFVSVIGIIFGSYFYINETIL), 123 to 151 (GFAWQMTVLFATIAFFGWMMRQVDISMKL), and 156 to 178 (HVPIAFGVAFSAWLVLQVIRPIA). Residues His-183 and His-213 each coordinate (7R,8Z)-bacteriochlorophyll b. The helical transmembrane segment at 211-238 (PFHAIGITGLFASTWLLACHGSLILSAA) threads the bilayer. A Fe cation-binding site is contributed by His-230. Phe-253 serves as a coordination point for a ubiquinone. Residues 262 to 287 (GESGVHRLGYIFAIGGILSADLCILL) form a helical membrane-spanning segment. Residue His-267 participates in Fe cation binding.

The protein belongs to the reaction center PufL/M/PsbA/D family. In terms of assembly, reaction center is composed of four bacteriochlorophylls, two bacteriopheophytins, two ubiquinones, one iron, and two highly hydrophobic polypeptide chains (designated L and M).

The protein localises to the cell membrane. Functionally, the reaction center is a membrane-bound complex that mediates the initial photochemical event in the electron transfer process of photosynthesis. The polypeptide is Reaction center protein L chain (pufL) (Chloroflexus aurantiacus (strain ATCC 29366 / DSM 635 / J-10-fl)).